The sequence spans 264 residues: SPRY domain-containing SOCS box protein 2 (264 aa).

Residues 1–19 (MGQTALARGSSSTPTSQAL) show a composition bias toward polar residues. The interval 1-34 (MGQTALARGSSSTPTSQALYSDFSPPEGLEELLS) is disordered. The region spanning 26–221 (PEGLEELLSA…VRIRYMGERR (196 aa)) is the B30.2/SPRY domain. Residues 222–264 (VEEPQSLLHLSRLCVRHALGDTRLGQISTLPLPPAMKRYLLYK) enclose the SOCS box domain.

Belongs to the SPSB family. As to quaternary structure, component of the probable ECS(SPSB2) E3 ubiquitin-protein ligase complex which contains CUL5, RNF7/RBX2, Elongin BC complex and SPSB2. Interacts with CUL5, RNF7, ELOB and ELOC. Interacts with MET. Interacts (via B30.2/SPRY domain) with PAWR; this interaction occurs in association with the Elongin BC complex. Interacts with NOS2.

It is found in the cytoplasm. Its subcellular location is the cytosol. The protein operates within protein modification; protein ubiquitination. In terms of biological role, substrate recognition component of a SCF-like ECS (Elongin BC-CUL2/5-SOCS-box protein) E3 ubiquitin-protein ligase complex which mediates the ubiquitination and subsequent proteasomal degradation of target proteins. Negatively regulates nitric oxide (NO) production and limits cellular toxicity in activated macrophages by mediating the ubiquitination and proteasomal degradation of NOS2. Acts as a bridge which links NOS2 with the ECS E3 ubiquitin ligase complex components ELOC and CUL5. This Mus musculus (Mouse) protein is SPRY domain-containing SOCS box protein 2 (Spsb2).